Here is an 8903-residue protein sequence, read N- to C-terminus: Nonribosomal peptide synthetase vlms (8903 aa).

Residues 11–84 (GSCRTTLGKV…ELADSIDEQN (74 aa)) form the Carrier 1 domain. The segment at 13–81 (CRTTLGKVAA…TLAELADSID (69 aa)) is thiolation (T) domain 1. Residue S45 is modified to O-(pantetheine 4'-phosphoryl)serine. Adenylation (A) domain regions lie at residues 59 to 736 (GIWV…SHLP) and 989 to 1386 (MAAQ…IKIR). A condensation (C) domain 1 region spans residues 572-953 (VPHQLDTEKL…FLLDGVNMSI (382 aa)). In terms of domain architecture, Carrier 2 spans 1524–1600 (SSMSTVEQEL…QLALAAESQA (77 aa)). Residues 1529–1597 (VEQELRQIWS…TIPQLALAAE (69 aa)) form a thiolation (T) domain 2 region. S1561 is modified (O-(pantetheine 4'-phosphoryl)serine). Positions 1613 to 2050 (FPLSPIQKMY…TVKELAAVSA (438 aa)) are epimerase (E) domain 1. Residues 2091–2523 (DILPCSPIQQ…LLSVSEENKL (433 aa)) form a condensation (C) domain 2 region. The adenylation (A) domain 2 stretch occupies residues 2546–2943 (MSSHADATAI…GRQDSQVKIR (398 aa)). A Carrier 3 domain is found at 3084–3160 (LFTTAIERQL…ELALQAKMVD (77 aa)). The segment at 3089–3157 (IERQLRQVWS…TIPELALQAK (69 aa)) is thiolation (T) domain 3. S3121 carries the post-translational modification O-(pantetheine 4'-phosphoryl)serine. Residues 3174–3614 (FALSPIQQMY…AIKSLVEELM (441 aa)) are epimerase (E) domain 2. The segment at 3655-4093 (EDILPCSPMQ…LMSTKDIQQL (439 aa)) is condensation (C) domain 3. The adenylation (A) domain 3 stretch occupies residues 4114-4512 (ERLNTQPESM…GRIDTQIKIR (399 aa)). The Carrier 4 domain occupies 4649–4725 (APRTTMEKKL…DLAEATELKC (77 aa)). The interval 4654-4722 (MEKKLRDLFA…ILADLAEATE (69 aa)) is thiolation (T) domain 4. Position 4686 is an O-(pantetheine 4'-phosphoryl)serine (S4686). The interval 4775–5191 (EDVYPCSPLQ…AQLQMLSEED (417 aa)) is condensation (C) domain 4. The interval 5216–5614 (ETMTSQPDAP…GRRDTQVKIR (399 aa)) is adenylation (A) domain 4. Positions 5753–5829 (APTTAMEKRL…DLAQELEQRH (77 aa)) constitute a Carrier 5 domain. The segment at 5758-5826 (MEKRLQNLFC…RLGDLAQELE (69 aa)) is thiolation (T) domain 5. Residue S5790 is modified to O-(pantetheine 4'-phosphoryl)serine. Residue E5875 is a region of interest, condensation (C) domain 5. Residues 6311 to 6702 (EEQMSLRPSE…GRMDGQIKIR (392 aa)) form an adenylation (A) domain 5 region. The region spanning 6836 to 6912 (SSATNTERQL…ELAATLEVMD (77 aa)) is the Carrier 6 domain. The tract at residues 6841–6909 (TERQLRQIWS…TIPELAATLE (69 aa)) is thiolation (T) domain 6. S6873 is modified (O-(pantetheine 4'-phosphoryl)serine). An epimerase (E) domain 3 region spans residues 6923–7349 (GFFELSPIQR…YGRTIKTLVE (427 aa)). The segment at 7391 to 7823 (EDILPCSPIQ…LVLTNDEAQI (433 aa)) is condensation (C) domain 6. An adenylation (A) domain 6 region spans residues 7844–8240 (EQMARKPEAQ…LDRIGTQVKI (397 aa)). The 77-residue stretch at 8368–8444 (APISATEAVF…AMAACVSDVS (77 aa)) folds into the Carrier 7 domain. The tract at residues 8369–8441 (PISATEAVFC…VLHAMAACVS (73 aa)) is thiolation (T) domain 7. An O-(pantetheine 4'-phosphoryl)serine modification is found at S8405. Residues 8482 to 8897 (DVLPTTEFQT…MENPRSTVGH (416 aa)) are condensation (C) domain 7.

Belongs to the NRP synthetase family.

The protein operates within secondary metabolite biosynthesis. Nonribosomal peptide synthetase; part of the gene cluster that mediates the biosynthesis of verlamelin, a lipopeptide that exhibits antifungal activity against plant pathogenic fungi. Verlamelin is a cyclic hexadepsipeptide and is bridged by ester bonding between a 5-hydroxytetradecanoic acid moiety and a carboxyl group on the terminal Val of amide-bonded tetradecanoyl-hexapeptide D-allo-Thr-D-Ala-L-Pro-L-Gln-D-Tyr-L-Val. VlmA and vlmB are altogether regarded as essential components in the biosynthesis of 5-hydroxytetradecanoic acid. VlmA catalyzes the hydroxylation at position C5 of tetradecanoic acid produced in primary metabolism, while the precise function of vlmB still remains to be solved. To be loaded onto the waiting NRPS, 5-hydroxytetradecanoic acid is activated in the form of acyladenylate by the AMP-dependent ligase vlmC. VlmS seems to accept the fatty-acyl intermediate onto the initial module to further elongate amino acid residues by the downstream modules. In addition, in the last module at its C-terminus, vlmS contains a surplus condensation (C) domain that may be involved in cyclization, the last step to form verlamelin. The sequence is that of Nonribosomal peptide synthetase vlms from Lecanicillium sp.